A 710-amino-acid polypeptide reads, in one-letter code: Polyribonucleotide nucleotidyltransferase (710 aa).

Positions 489 and 495 each coordinate Mg(2+). The KH domain occupies 556-615 (PKIDTIKIDVDKIKVVIGKGGETIDKIIAETGVKIDIDDEGNVSIYSSDQAAINRTKEII). Residues 625–693 (GEVYHAKVVR…EKGRVDASMK (69 aa)) form the S1 motif domain. A disordered region spans residues 691–710 (SMKALIPRPPKPEKKEEKHD). Basic and acidic residues predominate over residues 700–710 (PKPEKKEEKHD).

It belongs to the polyribonucleotide nucleotidyltransferase family. Mg(2+) serves as cofactor.

It localises to the cytoplasm. It carries out the reaction RNA(n+1) + phosphate = RNA(n) + a ribonucleoside 5'-diphosphate. Involved in mRNA degradation. Catalyzes the phosphorolysis of single-stranded polyribonucleotides processively in the 3'- to 5'-direction. This chain is Polyribonucleotide nucleotidyltransferase, found in Streptococcus pyogenes serotype M2 (strain MGAS10270).